The sequence spans 434 residues: Beta-enolase (434 aa).

Residue Ala2 is modified to N-acetylalanine. Thr72 is modified (phosphothreonine). 2 positions are modified to phosphoserine: Ser83 and Ser157. Substrate contacts are provided by His158 and Glu167. Ser176 bears the Phosphoserine mark. Thr205 bears the Phosphothreonine mark. Residue Glu210 is the Proton donor of the active site. Thr229 carries the post-translational modification Phosphothreonine. The residue at position 236 (Tyr236) is a Phosphotyrosine. Position 245 (Asp245) interacts with Mg(2+). Ser263 carries the post-translational modification Phosphoserine. The substrate site is built by Glu293 and Asp318. Positions 293 and 318 each coordinate Mg(2+). Catalysis depends on Lys343, which acts as the Proton acceptor. Substrate is bound by residues 370-373 (SHRS) and Lys394.

It belongs to the enolase family. As to quaternary structure, mammalian enolase is composed of 3 isozyme subunits, alpha, beta and gamma, which can form homodimers or heterodimers which are cell-type and development-specific. Interacts with PNKD. The cofactor is Mg(2+). As to expression, the alpha/alpha homodimer is expressed in embryo and in most adult tissues. The alpha/beta heterodimer and the beta/beta homodimer are found in striated muscle, and the alpha/gamma heterodimer and the gamma/gamma homodimer in neurons.

The protein localises to the cytoplasm. It carries out the reaction (2R)-2-phosphoglycerate = phosphoenolpyruvate + H2O. It participates in carbohydrate degradation; glycolysis; pyruvate from D-glyceraldehyde 3-phosphate: step 4/5. In terms of biological role, glycolytic enzyme that catalyzes the conversion of 2-phosphoglycerate to phosphoenolpyruvate. Appears to have a function in striated muscle development and regeneration. The protein is Beta-enolase (ENO3) of Oryctolagus cuniculus (Rabbit).